The primary structure comprises 645 residues: ATP-dependent zinc metalloprotease FtsH 3 (645 aa).

The Cytoplasmic segment spans residues 1–11 (MQNKRNQSRVL). Residues 12-32 (WLLLIYITIGIFIYVGVNSLI) form a helical membrane-spanning segment. The Periplasmic portion of the chain corresponds to 33 to 110 (GTPDVSKIEY…YVRSLENSWW (78 aa)). A helical membrane pass occupies residues 111–131 (ISILTFLLPVFLLIFLFTFLF). The Cytoplasmic portion of the chain corresponds to 132 to 645 (RSSGGGANQG…ENNLIERKGI (514 aa)). 202 to 209 (GEPGTGKT) lines the ATP pocket. A Zn(2+)-binding site is contributed by His424. Glu425 is a catalytic residue. The Zn(2+) site is built by His428 and Asp501.

This sequence in the central section; belongs to the AAA ATPase family. In the C-terminal section; belongs to the peptidase M41 family. As to quaternary structure, homohexamer. It depends on Zn(2+) as a cofactor.

It is found in the cell inner membrane. Its function is as follows. Acts as a processive, ATP-dependent zinc metallopeptidase for both cytoplasmic and membrane proteins. Plays a role in the quality control of integral membrane proteins. This chain is ATP-dependent zinc metalloprotease FtsH 3, found in Petrotoga mobilis (strain DSM 10674 / SJ95).